The sequence spans 442 residues: Histidine--tRNA ligase (442 aa).

This sequence belongs to the class-II aminoacyl-tRNA synthetase family. Homodimer.

It localises to the cytoplasm. The enzyme catalyses tRNA(His) + L-histidine + ATP = L-histidyl-tRNA(His) + AMP + diphosphate + H(+). The sequence is that of Histidine--tRNA ligase from Helicobacter hepaticus (strain ATCC 51449 / 3B1).